A 520-amino-acid chain; its full sequence is Beta-glucosidase 45 (520 aa).

An N-terminal signal peptide occupies residues 1 to 22; the sequence is MKNLTSFVIVILLQSLLFHVYG. Asn3 carries N-linked (GlcNAc...) asparagine glycosylation. A beta-D-glucoside is bound by residues Gln52, His155, and 200-201; that span reads NE. Catalysis depends on Glu201, which acts as the Proton donor. Cys220 and Cys227 are joined by a disulfide. A glycan (N-linked (GlcNAc...) asparagine) is linked at Asn226. An a beta-D-glucoside-binding site is contributed by Tyr344. Cys352 and Cys357 form a disulfide bridge. An N-linked (GlcNAc...) asparagine glycan is attached at Asn378. Glu417 provides a ligand contact to a beta-D-glucoside. The Nucleophile role is filled by Glu417. Residue Asn435 is glycosylated (N-linked (GlcNAc...) asparagine). Residues Trp466, 473–474, and Phe482 each bind a beta-D-glucoside; that span reads EW.

The protein belongs to the glycosyl hydrolase 1 family. In terms of tissue distribution, expressed in stems and siliques.

The enzyme catalyses Hydrolysis of terminal, non-reducing beta-D-glucosyl residues with release of beta-D-glucose.. In terms of biological role, hydrolyzes p-nitrophenyl beta-D-glucoside and natural glucosides such as syringin, coniferin and p-coumaryl alcohol glucoside. May be involved in lignification by hydrolyzing monolignol glucosides. The chain is Beta-glucosidase 45 from Arabidopsis thaliana (Mouse-ear cress).